The primary structure comprises 406 residues: uncharacterized protein (406 aa).

Residues 1–36 (MDRVRSLIGNRRGRRHNRQHPPYPHSGSPSTVNLLG) are disordered.

The protein to yeast YMR316w.

This is an uncharacterized protein from Saccharomyces cerevisiae (strain ATCC 204508 / S288c) (Baker's yeast).